Consider the following 494-residue polypeptide: DUF21 domain-containing protein At4g14240 (494 aa).

Over 1–43 the chain is Extracellular; the sequence is MHLINAVAAARILSGIGQSNGNNGGEAIPFGSFEWITYAGISC. The CNNM transmembrane domain occupies 31-213; that stretch reads GSFEWITYAG…GKGGELTHDE (183 aa). Residues 44–64 traverse the membrane as a helical segment; the sequence is FLVLFAGIMSGLTLGLMSLGL. Topologically, residues 65–93 are cytoplasmic; sequence VELEILQRSGTPNEKKQAAAIFPVVQKQH. Residues 94–114 traverse the membrane as a helical segment; it reads QLLVTLLLCNAMAMEGLPIYL. The Extracellular segment spans residues 115–121; the sequence is DKLFNEY. Residues 122–142 traverse the membrane as a helical segment; it reads VAIILSVTFVLAFGEVIPQAI. The Cytoplasmic segment spans residues 143 to 159; sequence CTRYGLAVGANFVWLVR. A helical membrane pass occupies residues 160–180; it reads ILMTLCYPIAFPIGKILDLVL. Topologically, residues 181 to 494 are extracellular; sequence GHNDALFRRA…TITEPIRRNN (314 aa). CBS domains follow at residues 232 to 292, 297 to 352, and 364 to 425; these read MTPI…TETL, CIRR…SNDS, and GNHD…IVDE. Asn350 and Asn385 each carry an N-linked (GlcNAc...) asparagine glycan. Residues 459–494 form a disordered region; that stretch reads QKGTGGQNKQGQTNKVPGQEQDKMLGTITEPIRRNN.

It is found in the membrane. In Arabidopsis thaliana (Mouse-ear cress), this protein is DUF21 domain-containing protein At4g14240 (CBSDUF1).